The primary structure comprises 117 residues: Large ribosomal subunit protein bL20c (117 aa).

This sequence belongs to the bacterial ribosomal protein bL20 family.

It localises to the plastid. Its subcellular location is the chloroplast. Its function is as follows. Binds directly to 23S ribosomal RNA and is necessary for the in vitro assembly process of the 50S ribosomal subunit. It is not involved in the protein synthesizing functions of that subunit. The protein is Large ribosomal subunit protein bL20c (rpl20) of Arabidopsis thaliana (Mouse-ear cress).